Here is a 51-residue protein sequence, read N- to C-terminus: Basic phospholipase A2 Bfon11 (51 aa).

3 residues coordinate Ca(2+): tyrosine 27, glycine 29, and glycine 31. A disulfide bridge links cysteine 28 with cysteine 43. Residue histidine 46 is part of the active site. Aspartate 47 lines the Ca(2+) pocket.

This sequence belongs to the phospholipase A2 family. Group II subfamily. D49 sub-subfamily. Ca(2+) serves as cofactor. In terms of tissue distribution, expressed by the venom gland.

The protein localises to the secreted. The catalysed reaction is a 1,2-diacyl-sn-glycero-3-phosphocholine + H2O = a 1-acyl-sn-glycero-3-phosphocholine + a fatty acid + H(+). Functionally, snake venom phospholipase A2 (PLA2) that impairs hemostasis. PLA2 catalyzes the calcium-dependent hydrolysis of the 2-acyl groups in 3-sn-phosphoglycerides. The sequence is that of Basic phospholipase A2 Bfon11 from Bothrops fonsecai (Fonseca's lancehead).